The primary structure comprises 504 residues: Chorion-specific transcription factor GCMb (504 aa).

Positions 19-174 form a DNA-binding region, GCM; it reads LTWDINDPQM…KSETEGRRSA (156 aa). Residues cysteine 81, cysteine 87, cysteine 91, cysteine 118, cysteine 121, cysteine 130, histidine 157, and histidine 159 each contribute to the Zn(2+) site. Basic and acidic residues-rich tracts occupy residues 155 to 172 and 188 to 203; these read GVHD…EGRR and RRSE…DIRG. Residues 155–203 are disordered; it reads GVHDHPRPESKSETEGRRSALKRQMASFYQPQKRRSEEPEARSTQDIRG. The C-terminal conserved inhibitory domain (CCID) stretch occupies residues 379–393; that stretch reads LQTVITTTVAYQAYQ. The interval 438–472 is disordered; sequence ASPSGRAPLKVPGDCQAPRPTLDFPQEADPSGTDG.

Its subcellular location is the nucleus. Functionally, transcription factor that binds specific sequences on gene promoters and activate their transcription. Through the regulation of gene transcription, may play a role in parathyroid gland development. The sequence is that of Chorion-specific transcription factor GCMb from Mus musculus (Mouse).